The chain runs to 201 residues: Large ribosomal subunit protein uL4 (201 aa).

The tract at residues 43 to 69 is disordered; sequence TKAQKTRSEVAGGGKKPWRQKGTGRAR.

It belongs to the universal ribosomal protein uL4 family. In terms of assembly, part of the 50S ribosomal subunit.

Its function is as follows. One of the primary rRNA binding proteins, this protein initially binds near the 5'-end of the 23S rRNA. It is important during the early stages of 50S assembly. It makes multiple contacts with different domains of the 23S rRNA in the assembled 50S subunit and ribosome. Functionally, forms part of the polypeptide exit tunnel. This Idiomarina loihiensis (strain ATCC BAA-735 / DSM 15497 / L2-TR) protein is Large ribosomal subunit protein uL4.